Here is a 223-residue protein sequence, read N- to C-terminus: Ribose-5-phosphate isomerase A (223 aa).

Residues 32–35, 85–88, and 98–101 contribute to the substrate site; these read TGST, DGAD, and KGGG. The Proton acceptor role is filled by glutamate 107. Substrate is bound at residue lysine 125.

Belongs to the ribose 5-phosphate isomerase family. Homodimer.

The catalysed reaction is aldehydo-D-ribose 5-phosphate = D-ribulose 5-phosphate. Its pathway is carbohydrate degradation; pentose phosphate pathway; D-ribose 5-phosphate from D-ribulose 5-phosphate (non-oxidative stage): step 1/1. Its function is as follows. Catalyzes the reversible conversion of ribose-5-phosphate to ribulose 5-phosphate. The chain is Ribose-5-phosphate isomerase A from Pseudomonas syringae pv. tomato (strain ATCC BAA-871 / DC3000).